Here is a 352-residue protein sequence, read N- to C-terminus: Holliday junction branch migration complex subunit RuvB (352 aa).

The segment at 4 to 185 (ADRLIAATGP…FGIVQRLEFY (182 aa)) is large ATPase domain (RuvB-L). ATP is bound by residues isoleucine 24, arginine 25, glycine 66, lysine 69, threonine 70, threonine 71, 132–134 (EDF), arginine 175, tyrosine 185, and arginine 222. Threonine 70 serves as a coordination point for Mg(2+). Residues 186–256 (STADLATIVS…VADLALNLLD (71 aa)) are small ATPAse domain (RuvB-S). Residues 259–352 (EHGFDHQDRR…VDEFLDAVDD (94 aa)) are head domain (RuvB-H). DNA contacts are provided by arginine 295, arginine 314, and arginine 319.

This sequence belongs to the RuvB family. As to quaternary structure, homohexamer. Forms an RuvA(8)-RuvB(12)-Holliday junction (HJ) complex. HJ DNA is sandwiched between 2 RuvA tetramers; dsDNA enters through RuvA and exits via RuvB. An RuvB hexamer assembles on each DNA strand where it exits the tetramer. Each RuvB hexamer is contacted by two RuvA subunits (via domain III) on 2 adjacent RuvB subunits; this complex drives branch migration. In the full resolvosome a probable DNA-RuvA(4)-RuvB(12)-RuvC(2) complex forms which resolves the HJ.

The protein localises to the cytoplasm. The catalysed reaction is ATP + H2O = ADP + phosphate + H(+). The RuvA-RuvB-RuvC complex processes Holliday junction (HJ) DNA during genetic recombination and DNA repair, while the RuvA-RuvB complex plays an important role in the rescue of blocked DNA replication forks via replication fork reversal (RFR). RuvA specifically binds to HJ cruciform DNA, conferring on it an open structure. The RuvB hexamer acts as an ATP-dependent pump, pulling dsDNA into and through the RuvAB complex. RuvB forms 2 homohexamers on either side of HJ DNA bound by 1 or 2 RuvA tetramers; 4 subunits per hexamer contact DNA at a time. Coordinated motions by a converter formed by DNA-disengaged RuvB subunits stimulates ATP hydrolysis and nucleotide exchange. Immobilization of the converter enables RuvB to convert the ATP-contained energy into a lever motion, pulling 2 nucleotides of DNA out of the RuvA tetramer per ATP hydrolyzed, thus driving DNA branch migration. The RuvB motors rotate together with the DNA substrate, which together with the progressing nucleotide cycle form the mechanistic basis for DNA recombination by continuous HJ branch migration. Branch migration allows RuvC to scan DNA until it finds its consensus sequence, where it cleaves and resolves cruciform DNA. In Pseudomonas fluorescens (strain SBW25), this protein is Holliday junction branch migration complex subunit RuvB.